The following is a 1126-amino-acid chain: Formin-B (1126 aa).

A disordered region spans residues 1–21 (MFFKGKKKDKEKEKSHGNIGN). In terms of domain architecture, GBD/FH3 spans 38-406 (EQNLSNEDLK…LILKDPSKES (369 aa)). Residues 427–447 (LNNSNNNNNNNNSNNNNNDSN) are compositionally biased toward low complexity. Positions 427–462 (LNNSNNNNNNNNSNNNNNDSNVSTPNINTGSPLLPP) are disordered. Residues 448–462 (VSTPNINTGSPLLPP) are compositionally biased toward polar residues. Positions 463–514 (QQYQDLEQKLQLTQNEKNESQNKVKQLESEIKGLNSTLTGLQLKVTKLEADL) form a coiled coil. The segment covering 518–532 (SVTTPPSDTNGTTSP) has biased composition (polar residues). Disordered stretches follow at residues 518–619 (SVTT…SVPS) and 1004–1078 (ARKK…QNGT). One can recognise an FH1 domain in the interval 527-611 (NGTTSPPIEA…PGAPAVPNLP (85 aa)). The segment covering 543–597 (GAPPPPPPPPPAPPVSGGGPPPPPPPPPPSSGGGPPPPPPPPSSGGPPPPPPPPG) has biased composition (pro residues). Composition is skewed to low complexity over residues 598 to 607 (GMKKPGAPAV), 1009 to 1022 (AASG…SGSS), and 1032 to 1064 (SPIT…QQQQ). Residues 612 to 1011 (PKKSSVPSVK…LAARKKAAAS (400 aa)) form the FH2 domain. The stretch at 980-1010 (KFKNEFKRTIESIQKERENVQKLAARKKAAA) forms a coiled coil. The 30-residue stretch at 1071-1100 (DDIPQNGTFMDQLMSKMKGGEAIRASRRAS) folds into the DAD domain.

It belongs to the formin homology family. Diaphanous subfamily. In terms of assembly, interacts (via GBD/FH3 domain) with activated Rho-GTPases. Interacts with pfyA and pfyB.

Formins play an important role in the nucleation of actin and the formation of linear actin filaments. This chain is Formin-B (forB), found in Dictyostelium discoideum (Social amoeba).